A 66-amino-acid polypeptide reads, in one-letter code: MANTKDARVTIALECTSCIQRKTSGKSAGLCRYTTRKNRRNTPARLELEKYCFHCHKHTLHKESKK.

Belongs to the bacterial ribosomal protein bL33 family.

It localises to the plastid. The protein localises to the chloroplast. The protein is Large ribosomal subunit protein bL33c of Adiantum capillus-veneris (Maidenhair fern).